We begin with the raw amino-acid sequence, 243 residues long: Small ribosomal subunit protein uS3 (243 aa).

The KH type-2 domain occupies 38-106 (IRKYLNARLA…DIQINIFEVK (69 aa)). The interval 217–243 (TQTKESGRGGNGNNNGGKNFKRKKNNR) is disordered.

This sequence belongs to the universal ribosomal protein uS3 family. As to quaternary structure, part of the 30S ribosomal subunit. Forms a tight complex with proteins S10 and S14.

In terms of biological role, binds the lower part of the 30S subunit head. Binds mRNA in the 70S ribosome, positioning it for translation. The protein is Small ribosomal subunit protein uS3 of Phocaeicola vulgatus (strain ATCC 8482 / DSM 1447 / JCM 5826 / CCUG 4940 / NBRC 14291 / NCTC 11154) (Bacteroides vulgatus).